We begin with the raw amino-acid sequence, 482 residues long: Probable cytosol aminopeptidase (482 aa).

Mn(2+)-binding residues include Lys-251 and Asp-256. Lys-263 is an active-site residue. Positions 274, 333, and 335 each coordinate Mn(2+). Residue Arg-337 is part of the active site.

This sequence belongs to the peptidase M17 family. Mn(2+) is required as a cofactor.

The protein resides in the cytoplasm. The catalysed reaction is Release of an N-terminal amino acid, Xaa-|-Yaa-, in which Xaa is preferably Leu, but may be other amino acids including Pro although not Arg or Lys, and Yaa may be Pro. Amino acid amides and methyl esters are also readily hydrolyzed, but rates on arylamides are exceedingly low.. It catalyses the reaction Release of an N-terminal amino acid, preferentially leucine, but not glutamic or aspartic acids.. Functionally, presumably involved in the processing and regular turnover of intracellular proteins. Catalyzes the removal of unsubstituted N-terminal amino acids from various peptides. This is Probable cytosol aminopeptidase from Acinetobacter baumannii (strain SDF).